Reading from the N-terminus, the 895-residue chain is Transcription factor SWI6 (895 aa).

The span at 1 to 45 (MASTVAGNSFVSQQHPGNLHSANLQSQSQGFRRQNSTSSVPSTAS) shows a compositional bias: polar residues. Residues 1 to 107 (MASTVAGNSF…SDQNVPQQPQ (107 aa)) are disordered. Over residues 64–100 (MSSQQSQPPASQQSFSMSQTGSQPQPSQSSFRSYSDQ) the composition is skewed to low complexity. The 108-residue stretch at 112-219 (IYTAVYSNVE…NRNPDGSVSQ (108 aa)) folds into the HTH APSES-type domain. A DNA-binding region (H-T-H motif) is located at residues 143–164 (ATQILKVAGVEKGKRTKILEKE). Disordered regions lie at residues 272–293 (ARFD…SFQR) and 323–358 (NMAF…NSFG). ANK repeat units follow at residues 458–488 (QCHT…PFRV) and 607–636 (AGDT…SPHI). Residues 653–684 (SDGAMKTKGDSGGDVENGDVGGSSQKSNESSN) are disordered. Over residues 674–684 (GSSQKSNESSN) the composition is skewed to polar residues. Positions 698–759 (SANFQEEIKN…VTNLQRAEER (62 aa)) form a coiled coil.

Its subcellular location is the nucleus. Functionally, transcription factor that plays a role downstream of the MCK1-MKK2-MPS1 cascade. Required for hyphal morphogenesis and pathogenicity. Is an important oxidative stress response regulator and plays a positive role in the regulation of extracellular peroxidases. The protein is Transcription factor SWI6 of Pyricularia oryzae (strain 70-15 / ATCC MYA-4617 / FGSC 8958) (Rice blast fungus).